Consider the following 294-residue polypeptide: MSWLEKIFNTSNIVSSRKASIPEGVWTKCTSCEQVLYSAELERNLEVCPKCDHHMRMKARKRLETFLDAEGRVEIGAELEPKDVLKFKDSKRYKDRISAAQKSSEETDALVVMKGTLLELPVVACAFEFSFMGGSMGSVVGARFVKAVDAAIENNCPLVCFSASGGARMQEALMSLMQMAKTSAALARLSRKGLPFFSVLTDPTMGGVSASLAMLGDINIGEPKALIGFAGRRVIEQTVREDLPEGFQRSEFLLEHGAIDMIVDRREMRQRIGGLMAKMTNQESPLVVPVDGSH.

The region spanning 25 to 294 is the CoA carboxyltransferase N-terminal domain; sequence VWTKCTSCEQ…PLVVPVDGSH (270 aa). Residues Cys-29, Cys-32, Cys-48, and Cys-51 each contribute to the Zn(2+) site. The C4-type zinc finger occupies 29-51; it reads CTSCEQVLYSAELERNLEVCPKC.

Belongs to the AccD/PCCB family. As to quaternary structure, acetyl-CoA carboxylase is a heterohexamer composed of biotin carboxyl carrier protein (AccB), biotin carboxylase (AccC) and two subunits each of ACCase subunit alpha (AccA) and ACCase subunit beta (AccD). Zn(2+) is required as a cofactor.

Its subcellular location is the cytoplasm. The enzyme catalyses N(6)-carboxybiotinyl-L-lysyl-[protein] + acetyl-CoA = N(6)-biotinyl-L-lysyl-[protein] + malonyl-CoA. It functions in the pathway lipid metabolism; malonyl-CoA biosynthesis; malonyl-CoA from acetyl-CoA: step 1/1. Functionally, component of the acetyl coenzyme A carboxylase (ACC) complex. Biotin carboxylase (BC) catalyzes the carboxylation of biotin on its carrier protein (BCCP) and then the CO(2) group is transferred by the transcarboxylase to acetyl-CoA to form malonyl-CoA. This chain is Acetyl-coenzyme A carboxylase carboxyl transferase subunit beta, found in Aliivibrio fischeri (strain ATCC 700601 / ES114) (Vibrio fischeri).